A 152-amino-acid chain; its full sequence is Mid1-interacting protein 1A (152 aa).

The segment covering 87-105 (SEDQRRKKDTSASEPVRTE) has biased composition (basic and acidic residues). The disordered stretch occupies residues 87-109 (SEDQRRKKDTSASEPVRTEEESD).

This sequence belongs to the SPOT14 family. In terms of tissue distribution, expressed for a short period in the cells that will produce the enveloping layer (EVL).

Its subcellular location is the nucleus. The protein resides in the cytoplasm. It is found in the cytoskeleton. Its function is as follows. Involved in stabilization of microtubules. May play a role in the regulation of lipogenesis. The polypeptide is Mid1-interacting protein 1A (mid1ip1a) (Danio rerio (Zebrafish)).